The following is a 443-amino-acid chain: Probable D-serine dehydratase (443 aa).

At Lys-116 the chain carries N6-(pyridoxal phosphate)lysine.

The protein belongs to the serine/threonine dehydratase family. DsdA subfamily. The cofactor is pyridoxal 5'-phosphate.

It carries out the reaction D-serine = pyruvate + NH4(+). The polypeptide is Probable D-serine dehydratase (Bacillus cereus (strain AH187)).